The chain runs to 900 residues: Vacuolar membrane protein pep3 (900 aa).

Positions 1-20 (MSLAEDWIDPNSSEDSDIQE) are disordered. TPR repeat units follow at residues 314-345 (HLAF…SPHE), 373-406 (NNET…NTVL), 408-436 (GYAE…VEEV), and 546-579 (MKDQ…ETLI). A CHCR repeat occupies 602–756 (DLDVHALIPS…MFSKKSGIKE (155 aa)). The RING-type; atypical zinc finger occupies 837-884 (CWHCNQPLFSEPFVLFPCQHAFHRSCMLEKTYKLASEKNILKECQLCG).

This sequence belongs to the VPS18 family.

It is found in the vacuole membrane. In terms of biological role, required for vacuolar biogenesis. The protein is Vacuolar membrane protein pep3 (pep3) of Schizosaccharomyces pombe (strain 972 / ATCC 24843) (Fission yeast).